Reading from the N-terminus, the 2332-residue chain is Genome polyprotein (2332 aa).

Residues 1–201 (MNTTNCFIAL…WKTQVQKKLK (201 aa)) enclose the Peptidase C28 domain. Over 1-1480 (MNTTNCFIAL…SFVKRAFKRL (1480 aa)) the chain is Cytoplasmic. Active-site for leader protease activity residues include C51, H148, and D163. Disordered stretches follow at residues 199-218 (KLKG…QSGN) and 237-264 (TQLG…TNTQ). G202 is lipidated: N-myristoyl glycine; by host. Polar residues-rich tracts occupy residues 204–218 (GQSS…QSGN) and 237–251 (TQLG…SNEG). The segment covering 252-264 (STDTTSTHTTNTQ) has biased composition (low complexity). An antigenic epitope region spans residues 789–797 (ALLRAATYY). Positions 867-870 (RSGD) match the Cell attachment site motif. The 165-residue stretch at 1189 to 1353 (NVHIANLCKV…DGYKINNKLD (165 aa)) folds into the SF3 helicase domain. 1217–1224 (GKSGQGKS) contacts ATP. Residues 1481 to 1501 (KENFEIVALCLTLLANIVIMI) lie within the membrane without spanning it. Topologically, residues 1502-2332 (RETRKRQKMV…RWVNAVCGDA (831 aa)) are cytoplasmic. 2 stretches are compositionally biased toward basic and acidic residues: residues 1529 to 1538 (KTLDEAEKNP) and 1549 to 1563 (FRER…RDDV). A disordered region spans residues 1529 to 1588 (KTLDEAEKNPLETSGASTVGFRERSLTGQKVRDDVSSEPAQPAEDQPQAEGPYSGPLERQ). An O-(5'-phospho-RNA)-tyrosine mark is found at Y1581, Y1604, and Y1628. A Peptidase C3 domain is found at 1652-1848 (APPTDLQKMV…YCSCVSRSML (197 aa)). The active-site For protease 3C activity; Proton donor/acceptor is the H1695. Active-site for protease 3C activity residues include D1733 and C1812. Residues 1878–1886 (MRKTKLAPT) carry the Nuclear localization signal motif. Residues 2096–2214 (RNVWDVDYSA…ASDYDLDFEA (119 aa)) form the RdRp catalytic domain. D2200 (for RdRp activity) is an active-site residue.

This sequence belongs to the picornaviruses polyprotein family. Interacts with host ISG15. In terms of assembly, interacts (via R-G-D motif) with host ITGAV/ITGB6. Interacts with host MAVS; this interaction inhibits binding of host TRAF3 to MAVS, thereby suppressing interferon-mediated responses. As to quaternary structure, forms homooligomers. Homohexamer. Interacts with host VIM. Interacts with host BECN1. In terms of assembly, interacts with host DCTN3. As to quaternary structure, interacts with RNA-dependent RNA polymerase; this interaction allows 3B-1 to binds 2 polymerases and act as a primer. It also allows the recruitment of the RNA-dependent RNA polymerase to host membranes. Interacts with RNA-dependent RNA polymerase; this interaction allows 3B-2 to act as a primer. In terms of assembly, interacts with RNA-dependent RNA polymerase; this interaction allows 3B-3 to act as a primer. As to quaternary structure, interacts with 3B-1; this interaction allows 3B-1 to binds 2 polymerases and act as a primer. It also allows the recruitment of the RNA-dependent RNA polymerase to host membranes. Interacts with 3B-2; this interaction allows 3B-2 to act as a primer. Interacts with 3B-3; this interaction allows 3B-3 to act as a primer. Post-translationally, removes six residues from its own C-terminus, generating sLb(pro). In terms of processing, specific enzymatic cleavages in vivo by the viral proteases yield a variety of precursors and mature proteins. The polyprotein seems to be cotranslationally cleaved at the 2A/2B junction by a ribosomal skip from one codon to the next without formation of a peptide bond. This process would release the L-P1-2A peptide from the translational complex. During virion maturation, immature virions are rendered infectious following cleavage of VP0 into VP4 and VP2. This maturation seems to be an autocatalytic event triggered by the presence of RNA in the capsid and is followed by a conformational change of the particle. Post-translationally, myristoylation is required during RNA encapsidation and formation of the mature virus particle. In terms of processing, uridylylated by the polymerase and covalently linked to the 5'-end of genomic RNA. These uridylylated forms act as a nucleotide-peptide primer for the polymerase.

The protein localises to the host nucleus. It localises to the host cytoplasm. The protein resides in the virion. Its subcellular location is the host endoplasmic reticulum membrane. It is found in the host cytoplasmic vesicle membrane. The catalysed reaction is Autocatalytically cleaves itself from the polyprotein of the foot-and-mouth disease virus by hydrolysis of a Lys-|-Gly bond, but then cleaves host cell initiation factor eIF-4G at bonds -Gly-|-Arg- and -Lys-|-Arg-.. It carries out the reaction a ribonucleoside 5'-triphosphate + H2O = a ribonucleoside 5'-diphosphate + phosphate + H(+). It catalyses the reaction RNA(n) + a ribonucleoside 5'-triphosphate = RNA(n+1) + diphosphate. The enzyme catalyses Selective cleavage of Gln-|-Gly bond in the poliovirus polyprotein. In other picornavirus reactions Glu may be substituted for Gln, and Ser or Thr for Gly.. Its function is as follows. Autocatalytically cleaves itself from the polyprotein at the L/VP0 junction. Also cleaves the host translation initiation factors EIF4G1 and EIF4G3, in order to shut off the capped cellular mRNA transcription. Plays a role in counteracting host innate antiviral response using diverse mechanisms. Possesses a deubiquitinase activity acting on both 'Lys-48' and 'Lys-63'-linked polyubiquitin chains. In turn, inhibits the ubiquitination and subsequent activation of key signaling molecules of type I IFN response such as host RIGI, TBK1, TRAF3 and TRAF6. Inhibits host NF-kappa-B activity by inducing a decrease in RELA mRNA levels. Cleaves a peptide bond in the C-terminus of host ISG15, resulting in the damaging of this modifier that can no longer be attached to target proteins. Also cleaves host G3BP1 and G3BP2 in order to inhibit cytoplasmic stress granules assembly. Functionally, lies on the inner surface of the capsid shell. After binding to the host receptor, the capsid undergoes conformational changes. Capsid protein VP4 is released, capsid protein VP1 N-terminus is externalized, and together, they shape a pore in the host membrane through which the viral genome is translocated into the host cell cytoplasm. After genome has been released, the channel shrinks. Forms an icosahedral capsid of pseudo T=3 symmetry with capsid proteins VP1 and VP3. The capsid is composed of 60 copies of each capsid protein organized in the form of twelve pentamers and encloses the viral positive strand RNA genome. Upon acidifcation in the endosome, dissociates into pentamers. In terms of biological role, forms an icosahedral capsid of pseudo T=3 symmetry with capsid proteins VP2 and VP3. The capsid is composed of 60 copies of each capsid protein organized in the form of twelve pentamers and encloses the viral positive strand RNA genome. Mediates cell entry by attachment to an integrin receptor, usually host ITGAV/ITGB6. In addition, targets host MAVS to suppress type I IFN pathway. Upon acidifcation in the endosome, dissociates into pentamers. Its function is as follows. Forms an icosahedral capsid of pseudo T=3 symmetry with capsid proteins VP0 and VP3. The capsid is composed of 60 copies of each capsid protein organized in the form of twelve pentamers and encloses the viral positive strand RNA genome. Functionally, mediates self-processing of the polyprotein by a translational effect termed 'ribosome skipping'. Mechanistically, 2A-mediated cleavage occurs between the C-terminal glycine and the proline of the downstream protein 2B. In the case of foot-and-mouth disease virus, the 2A oligopeptide is post-translationally 'trimmed' from the C-terminus of the upstream protein 1D by 3C proteinase. Plays an essential role in the virus replication cycle by acting as a viroporin. Creates a pore in the host endoplasmic reticulum and as a consequence releases Ca2+ in the cytoplasm of infected cell. In turn, high levels of cytoplasmic calcium may trigger membrane trafficking and transport of viral ER-associated proteins to viroplasms, sites of viral genome replication. In terms of biological role, associates with and induces structural rearrangements of intracellular membranes. Triggers host autophagy by interacting with host BECN1 and thereby promotes viral replication. Participates in viral replication and interacts with host DHX9. Displays RNA-binding, nucleotide binding and NTPase activities. May play a role in virion morphogenesis and viral RNA encapsidation by interacting with the capsid protein VP3. Its function is as follows. Plays important roles in virus replication, virulence and host range. Cooperates with host DDX56 to inhibit IRF3 nuclear translocation and subsequent type I interferon production. Functionally, covalently linked to the 5'-end of both the positive-strand and negative-strand genomic RNAs. Acts as a genome-linked replication primer. Covalently linked to the 5'-end0 of both the positive-strand and negative-strand genomic RNAs. Acts as a genome-linked replication primer. In terms of biological role, cysteine protease that generates mature viral proteins from the precursor polyprotein. In addition to its proteolytic activity, binds to viral RNA and thus influences viral genome replication. RNA and substrate bind cooperatively to the protease. Its function is as follows. RNA-directed RNA polymerase 3D-POL replicates genomic and antigenomic RNA by recognizing replications specific signals. Covalently attaches UMP to a tyrosine of VPg, which is used to prime RNA synthesis. The positive stranded RNA genome is first replicated at virus induced membranous vesicles, creating a dsRNA genomic replication form. This dsRNA is then used as template to synthesize positive stranded RNA genomes. ss(+)RNA genomes are either translated, replicated or encapsidated. This Bos taurus (Bovine) protein is Genome polyprotein.